Reading from the N-terminus, the 198-residue chain is Transcription factor FapR (198 aa).

A MaoC-like domain is found at 102–168 (TRIARGHHLF…GRTVVDVNSY (67 aa)).

This sequence belongs to the FapR family.

In terms of biological role, transcriptional factor involved in regulation of membrane lipid biosynthesis by repressing genes involved in fatty acid and phospholipid metabolism. In Geobacillus thermodenitrificans (strain NG80-2), this protein is Transcription factor FapR.